The following is a 300-amino-acid chain: Acetyl-coenzyme A carboxylase carboxyl transferase subunit beta 2 (300 aa).

A CoA carboxyltransferase N-terminal domain is found at 26 to 294 (VWVKCPSCRE…SGAYSSEAVA (269 aa)). The Zn(2+) site is built by Cys-30, Cys-33, Cys-49, and Cys-51. A C4-type zinc finger spans residues 30-51 (CPSCRELIYHKQLAERMKVCRC).

It belongs to the AccD/PCCB family. As to quaternary structure, acetyl-CoA carboxylase is a heterohexamer composed of biotin carboxyl carrier protein (AccB), biotin carboxylase (AccC) and two subunits each of ACCase subunit alpha (AccA) and ACCase subunit beta (AccD). Zn(2+) is required as a cofactor.

Its subcellular location is the cytoplasm. The catalysed reaction is N(6)-carboxybiotinyl-L-lysyl-[protein] + acetyl-CoA = N(6)-biotinyl-L-lysyl-[protein] + malonyl-CoA. It functions in the pathway lipid metabolism; malonyl-CoA biosynthesis; malonyl-CoA from acetyl-CoA: step 1/1. In terms of biological role, component of the acetyl coenzyme A carboxylase (ACC) complex. Biotin carboxylase (BC) catalyzes the carboxylation of biotin on its carrier protein (BCCP) and then the CO(2) group is transferred by the transcarboxylase to acetyl-CoA to form malonyl-CoA. This is Acetyl-coenzyme A carboxylase carboxyl transferase subunit beta 2 from Roseiflexus castenholzii (strain DSM 13941 / HLO8).